The sequence spans 538 residues: Syncytin-1 (538 aa).

An N-terminal signal peptide occupies residues 1–20 (MALPYHIFLFTVLLPSFTLT). Topologically, residues 21 to 443 (APPPCRCMTS…NTGPWGLLSQ (423 aa)) are extracellular. Residue N169 is glycosylated (N-linked (GlcNAc...) asparagine). Positions 186–189 (CWIC) match the CXXC motif. Disulfide bonds link C186–C189, C186–C405, and C397–C404. Residues N208, N214, N234, N242, and N281 are each glycosylated (N-linked (GlcNAc...) asparagine). The tract at residues 320–340 (ILPFVIGAGVLGALGTGIGGI) is fusion peptide. The tract at residues 380–396 (LQNRRALDLLTAERGGT) is immunosuppression. The CX6CC signature appears at 397-405 (CLFLGEECC). Residue N409 is glycosylated (N-linked (GlcNAc...) asparagine). Residues 444 to 464 (WMPWILPFLGPLAAIILLLLF) traverse the membrane as a helical segment. Residues 465-484 (GPCIFNLLVNFVSSRIEAVK) form an essential for the fusiogenic function region. Topologically, residues 465–538 (GPCIFNLLVN…LLRPNSAGSS (74 aa)) are cytoplasmic. The segment at 496-538 (KIYRRPLDRPASPRSDVNDIKGTPPEEILTAQPLLRPNSAGSS) is disordered.

It belongs to the gamma type-C retroviral envelope protein family. HERV class-I W env subfamily. In terms of assembly, the mature envelope protein (Env) consists of a trimer of SU-TM heterodimers attached probably by a labile interchain disulfide bond. Interacts with the C-type lectin CD209/DC-SIGN. Post-translationally, specific enzymatic cleavages in vivo yield mature proteins. Envelope glycoproteins are synthesized as an inactive precursor that is heavily N-glycosylated and processed likely by furin in the Golgi to yield the mature SU and TM proteins. The cleavage site between SU and TM requires the minimal sequence [KR]-X-[KR]-R. The CXXC motif is highly conserved across a broad range of retroviral envelope proteins. It is thought to participate in the formation of a labile disulfide bond possibly with the CX6CC motif present in the transmembrane protein.

It localises to the cell membrane. The protein resides in the virion. In terms of biological role, this endogenous retroviral envelope protein has retained its original fusogenic properties and participates in trophoblast fusion and the formation of a syncytium during placenta morphogenesis. May recognize and induce fusion through binding of SLC1A4 and SLC1A5. Its function is as follows. Endogenous envelope proteins may have kept, lost or modified their original function during evolution. Retroviral envelope proteins mediate receptor recognition and membrane fusion during early infection. The surface protein (SU) mediates receptor recognition, while the transmembrane protein (TM) acts as a class I viral fusion protein. The protein may have at least 3 conformational states: pre-fusion native state, pre-hairpin intermediate state, and post-fusion hairpin state. During viral and target cell membrane fusion, the coiled coil regions (heptad repeats) assume a trimer-of-hairpins structure, positioning the fusion peptide in close proximity to the C-terminal region of the ectodomain. The formation of this structure appears to drive apposition and subsequent fusion of membranes. The sequence is that of Syncytin-1 (ERVW-1) from Pan troglodytes (Chimpanzee).